Reading from the N-terminus, the 435-residue chain is Arginine biosynthesis bifunctional protein ArgJ, mitochondrial (435 aa).

Substrate-binding residues include T167, K193, T204, E291, N430, and T435. The Nucleophile role is filled by T204.

This sequence belongs to the ArgJ family. Heterodimer of an alpha and a beta chain. Post-translationally, the alpha and beta chains are autoproteolytically processed from a single precursor protein within the mitochondrion.

Its subcellular location is the mitochondrion matrix. The catalysed reaction is N(2)-acetyl-L-ornithine + L-glutamate = N-acetyl-L-glutamate + L-ornithine. It catalyses the reaction L-glutamate + acetyl-CoA = N-acetyl-L-glutamate + CoA + H(+). It functions in the pathway amino-acid biosynthesis; L-arginine biosynthesis; L-ornithine and N-acetyl-L-glutamate from L-glutamate and N(2)-acetyl-L-ornithine (cyclic): step 1/1. It participates in amino-acid biosynthesis; L-arginine biosynthesis; N(2)-acetyl-L-ornithine from L-glutamate: step 1/4. In terms of biological role, catalyzes two activities which are involved in the cyclic version of arginine biosynthesis: the synthesis of acetylglutamate from glutamate and acetyl-CoA, and of ornithine by transacetylation between acetylornithine and glutamate. The sequence is that of Arginine biosynthesis bifunctional protein ArgJ, mitochondrial from Heterostelium pallidum (strain ATCC 26659 / Pp 5 / PN500) (Cellular slime mold).